Reading from the N-terminus, the 134-residue chain is Large ribosomal subunit protein eL32 (134 aa).

This sequence belongs to the eukaryotic ribosomal protein eL32 family.

This chain is Large ribosomal subunit protein eL32 (RpL32), found in Apis mellifera (Honeybee).